The chain runs to 689 residues: Glycine--tRNA ligase beta subunit (689 aa).

The protein belongs to the class-II aminoacyl-tRNA synthetase family. As to quaternary structure, tetramer of two alpha and two beta subunits.

The protein resides in the cytoplasm. The enzyme catalyses tRNA(Gly) + glycine + ATP = glycyl-tRNA(Gly) + AMP + diphosphate. In Lacticaseibacillus casei (strain BL23) (Lactobacillus casei), this protein is Glycine--tRNA ligase beta subunit.